The following is a 126-amino-acid chain: MAITKEEVISFIENMSVLELANLVKELEEKFGVSAAAPVAVAAAGPAAGPAESAEEKTEFDVILKAAGANKIAVIKVVRGLTSLGLKEAKDLVDGAPQPVKTGISKEEAADAQKQLVEAGAEVEVK.

This sequence belongs to the bacterial ribosomal protein bL12 family. In terms of assembly, homodimer. Part of the ribosomal stalk of the 50S ribosomal subunit. Forms a multimeric L10(L12)X complex, where L10 forms an elongated spine to which 2 to 4 L12 dimers bind in a sequential fashion. Binds GTP-bound translation factors.

Functionally, forms part of the ribosomal stalk which helps the ribosome interact with GTP-bound translation factors. Is thus essential for accurate translation. This is Large ribosomal subunit protein bL12 from Citrifermentans bemidjiense (strain ATCC BAA-1014 / DSM 16622 / JCM 12645 / Bem) (Geobacter bemidjiensis).